The chain runs to 580 residues: Lysine--tRNA ligase (580 aa).

The 'HIGH' region motif lies at 43 to 51; it reads PSGPIHLGN. The interval 178–209 is disordered; that stretch reads KAPAKKSQKPLDEAELEAAEGSGAAAEDDGSS. The segment covering 196-209 has biased composition (low complexity); it reads AEGSGAAAEDDGSS. Positions 325 to 329 match the 'KMSKS' region motif; the sequence is KMSSS.

Belongs to the class-I aminoacyl-tRNA synthetase family.

It is found in the cytoplasm. The catalysed reaction is tRNA(Lys) + L-lysine + ATP = L-lysyl-tRNA(Lys) + AMP + diphosphate. The protein is Lysine--tRNA ligase (lysS) of Streptomyces coelicolor (strain ATCC BAA-471 / A3(2) / M145).